Reading from the N-terminus, the 252-residue chain is F-box/SPRY domain-containing protein 1 (252 aa).

Positions 1–48 (MVDPLCNYNVLEAIFSYLELNDLYRCSQVCKSWYHFLNDENSDVWRWH) constitute an F-box domain. The B30.2/SPRY domain maps to 58–250 (VKSDLLASVS…VSMVYLGTPL (193 aa)).

This sequence belongs to the FBXO45/Fsn family. As to quaternary structure, component of an E3 ubiquitin ligase complex composed of hiw and Fsn.

It localises to the synapse. The protein operates within protein modification; protein ubiquitination. In terms of biological role, required in the presynaptic motoneuron to down-regulate the levels of wnd and restrain synaptic terminal growth at the neuromuscular junction (NMJ). In Drosophila virilis (Fruit fly), this protein is F-box/SPRY domain-containing protein 1.